Here is a 298-residue protein sequence, read N- to C-terminus: Ribosomal protein L11 methyltransferase (298 aa).

4 residues coordinate S-adenosyl-L-methionine: Thr152, Gly173, Asp195, and Asn234.

This sequence belongs to the methyltransferase superfamily. PrmA family.

The protein resides in the cytoplasm. The enzyme catalyses L-lysyl-[protein] + 3 S-adenosyl-L-methionine = N(6),N(6),N(6)-trimethyl-L-lysyl-[protein] + 3 S-adenosyl-L-homocysteine + 3 H(+). Methylates ribosomal protein L11. The polypeptide is Ribosomal protein L11 methyltransferase (Ralstonia nicotianae (strain ATCC BAA-1114 / GMI1000) (Ralstonia solanacearum)).